Here is a 71-residue protein sequence, read N- to C-terminus: Large ribosomal subunit protein bL31 (71 aa).

Residues Cys16, Cys18, Cys38, and Cys41 each contribute to the Zn(2+) site.

The protein belongs to the bacterial ribosomal protein bL31 family. Type A subfamily. Part of the 50S ribosomal subunit. It depends on Zn(2+) as a cofactor.

In terms of biological role, binds the 23S rRNA. The chain is Large ribosomal subunit protein bL31 from Neisseria meningitidis serogroup A / serotype 4A (strain DSM 15465 / Z2491).